Here is a 48-residue protein sequence, read N- to C-terminus: Large ribosomal subunit protein bL36c (48 aa).

It belongs to the bacterial ribosomal protein bL36 family.

The protein resides in the plastid. It localises to the chloroplast. The polypeptide is Large ribosomal subunit protein bL36c (Rhodomonas salina (Cryptomonas salina)).